The chain runs to 443 residues: Tubulin beta chain (443 aa).

Glutamine 11, glutamate 69, serine 138, glycine 142, threonine 143, glycine 144, asparagine 204, and asparagine 226 together coordinate GTP. Glutamate 69 serves as a coordination point for Mg(2+). The segment at 421–443 (EYQQYQDASAEEEGEFGEEEEEN) is disordered. Residues 429 to 443 (SAEEEGEFGEEEEEN) are compositionally biased toward acidic residues.

It belongs to the tubulin family. Dimer of alpha and beta chains. A typical microtubule is a hollow water-filled tube with an outer diameter of 25 nm and an inner diameter of 15 nM. Alpha-beta heterodimers associate head-to-tail to form protofilaments running lengthwise along the microtubule wall with the beta-tubulin subunit facing the microtubule plus end conferring a structural polarity. Microtubules usually have 13 protofilaments but different protofilament numbers can be found in some organisms and specialized cells. It depends on Mg(2+) as a cofactor.

Its subcellular location is the cytoplasm. It localises to the cytoskeleton. In terms of biological role, tubulin is the major constituent of microtubules, a cylinder consisting of laterally associated linear protofilaments composed of alpha- and beta-tubulin heterodimers. Microtubules grow by the addition of GTP-tubulin dimers to the microtubule end, where a stabilizing cap forms. Below the cap, tubulin dimers are in GDP-bound state, owing to GTPase activity of alpha-tubulin. The polypeptide is Tubulin beta chain (TUBB1) (Polytomella agilis (Quadriflagellate alga)).